Here is a 357-residue protein sequence, read N- to C-terminus: UDP-xylose transporter 3 (357 aa).

10 consecutive transmembrane segments (helical) span residues 7-27 (FQLG…SIVI), 31-51 (ALIS…HLLV), 75-95 (VMGF…SLGF), 100-120 (FYQM…TLFF), 132-152 (LTIL…LNML), 154-174 (SVLS…TNTI), 194-214 (AITL…QNVF), 224-244 (FFIV…FLVI), 250-270 (VTYQ…GYVL), and 280-300 (ILGI…CSIE). Ser334 carries the phosphoserine modification.

Belongs to the TPT transporter family. TPT (TC 2.A.7.9) subfamily. As to expression, ubiquitous.

The protein resides in the golgi apparatus membrane. Its function is as follows. Nucleotide-sugar transporter that transports UDP-xylose and UMP in a strict counter-exchange mode. The chain is UDP-xylose transporter 3 from Arabidopsis thaliana (Mouse-ear cress).